The sequence spans 251 residues: Triosephosphate isomerase (251 aa).

9 to 11 provides a ligand contact to substrate; sequence NWK. The Electrophile role is filled by His-95. The active-site Proton acceptor is the Glu-167. Substrate contacts are provided by residues Gly-173, Ser-213, and 234–235; that span reads GG. At Ser-213 the chain carries Phosphoserine.

The protein belongs to the triosephosphate isomerase family. Homodimer.

It localises to the cytoplasm. It catalyses the reaction D-glyceraldehyde 3-phosphate = dihydroxyacetone phosphate. It participates in carbohydrate biosynthesis; gluconeogenesis. It functions in the pathway carbohydrate degradation; glycolysis; D-glyceraldehyde 3-phosphate from glycerone phosphate: step 1/1. Functionally, involved in the gluconeogenesis. Catalyzes stereospecifically the conversion of dihydroxyacetone phosphate (DHAP) to D-glyceraldehyde-3-phosphate (G3P). This chain is Triosephosphate isomerase, found in Halalkalibacterium halodurans (strain ATCC BAA-125 / DSM 18197 / FERM 7344 / JCM 9153 / C-125) (Bacillus halodurans).